The sequence spans 328 residues: HTH-type transcriptional regulator MalR (328 aa).

The HTH lacI-type domain occupies 2 to 57 (PVTIKDVAKAAGVSPSTVTRVIQNKSTISDETKKRVRKAMKELNYHPNLNARSLVS). The H-T-H motif DNA-binding region spans 5–24 (IKDVAKAAGVSPSTVTRVIQ). An inducer binding region spans residues 173 to 218 (TEYFIKKGCKRIAFIGGSKKLFVTKDRLTGYEQALKHYKLTTDNNR). The segment at 282-291 (NLAAYVDINS) is dimerization.

Transcriptional repressor of the maltosaccharide utilization operons malxCD and malMP. The polypeptide is HTH-type transcriptional regulator MalR (malR) (Streptococcus pneumoniae serotype 4 (strain ATCC BAA-334 / TIGR4)).